Consider the following 661-residue polypeptide: NUAK family SNF1-like kinase 1 (661 aa).

Methionine 1 carries the post-translational modification N-acetylmethionine. Positions 1–24 (MEGAAAPVAGDRPDLGLGAPGSPR) are disordered. Residue serine 22 is modified to Phosphoserine. The region spanning 55 to 306 (YELQETLGKG…IEDIANHWWV (252 aa)) is the Protein kinase domain. ATP-binding positions include 61 to 69 (LGKGTYGKV) and lysine 84. The active-site Proton acceptor is the aspartate 178. The residue at position 211 (threonine 211) is a Phosphothreonine; by LKB1. Disordered regions lie at residues 345 to 421 (TEAK…EGVV) and 442 to 570 (LPSS…RPSS). Over residues 393–404 (SSKRPKGILKKR) the composition is skewed to basic residues. Positions 399–402 (GILK) match the GILK motif motif. Serine 455 carries the post-translational modification Phosphoserine. The segment covering 518–529 (SCRRKGILKHSS) has biased composition (basic residues). The residue at position 600 (serine 600) is a Phosphoserine; by PKB/AKT1.

The protein belongs to the protein kinase superfamily. CAMK Ser/Thr protein kinase family. SNF1 subfamily. As to quaternary structure, interacts (via GILK motif) with PPP1CB; the interaction is direct and bridges NUAK1 and PPP1R12A. Interacts with CDKN1A. The cofactor is Mg(2+). Ubiquitinated with 'Lys-29'- and 'Lys-33'-linked polyubiquitins which appear to impede LKB1-mediated phosphorylation. Deubiquitinated by USP9X. Post-translationally, phosphorylated at Thr-211 by STK11/LKB1 in complex with STE20-related adapter-alpha (STRADA) pseudo kinase and CAB39. Not dephosphorylated by the myosin PP1 complex when regulating its activity, due to the presence of PPP1R12A, which prevents myosin PP1 from dephosphorylating NUAK1. Phosphorylated by STK38L upon stimulation with IGF1. Expressed at high levels in heart and brain, and at lower levels in skeletal muscle, kidney, ovary, placenta, lung and liver. Highly up-regulated in colorectal cancer cell lines.

The protein resides in the nucleus. It localises to the cytoplasm. It carries out the reaction L-seryl-[protein] + ATP = O-phospho-L-seryl-[protein] + ADP + H(+). The catalysed reaction is L-threonyl-[protein] + ATP = O-phospho-L-threonyl-[protein] + ADP + H(+). Activated by phosphorylation on Thr-211. Activated by phosphorylation at Ser-600 AKT1 during glucose starvation; the relevance of such activation in normal cells is however unsure. Functionally, serine/threonine-protein kinase involved in various processes such as cell adhesion, regulation of cell ploidy and senescence, cell proliferation and tumor progression. Phosphorylates ATM, CASP6, LATS1, PPP1R12A and p53/TP53. Acts as a regulator of cellular senescence and cellular ploidy by mediating phosphorylation of 'Ser-464' of LATS1, thereby controlling its stability. Controls cell adhesion by regulating activity of the myosin protein phosphatase 1 (PP1) complex. Acts by mediating phosphorylation of PPP1R12A subunit of myosin PP1: phosphorylated PPP1R12A then interacts with 14-3-3, leading to reduced dephosphorylation of myosin MLC2 by myosin PP1. May be involved in DNA damage response: phosphorylates p53/TP53 at 'Ser-15' and 'Ser-392' and is recruited to the CDKN1A/WAF1 promoter to participate in transcription activation by p53/TP53. May also act as a tumor malignancy-associated factor by promoting tumor invasion and metastasis under regulation and phosphorylation by AKT1. Suppresses Fas-induced apoptosis by mediating phosphorylation of CASP6, thereby suppressing the activation of the caspase and the subsequent cleavage of CFLAR. Regulates UV radiation-induced DNA damage response mediated by CDKN1A. In association with STK11, phosphorylates CDKN1A in response to UV radiation and contributes to its degradation which is necessary for optimal DNA repair. This is NUAK family SNF1-like kinase 1 (NUAK1) from Homo sapiens (Human).